Reading from the N-terminus, the 132-residue chain is Small ribosomal subunit protein uS8 (132 aa).

Belongs to the universal ribosomal protein uS8 family. In terms of assembly, part of the 30S ribosomal subunit. Contacts proteins S5 and S12.

One of the primary rRNA binding proteins, it binds directly to 16S rRNA central domain where it helps coordinate assembly of the platform of the 30S subunit. This chain is Small ribosomal subunit protein uS8, found in Streptococcus mutans serotype c (strain ATCC 700610 / UA159).